Reading from the N-terminus, the 128-residue chain is Large ribosomal subunit protein bL21 (128 aa).

Positions 104 to 128 are disordered; it reads GKSPSVGPRPKRVKAEPAPAADAAE. Over residues 119–128 the composition is skewed to low complexity; the sequence is EPAPAADAAE.

It belongs to the bacterial ribosomal protein bL21 family. Part of the 50S ribosomal subunit. Contacts protein L20.

This protein binds to 23S rRNA in the presence of protein L20. In Rhodopseudomonas palustris (strain HaA2), this protein is Large ribosomal subunit protein bL21.